The primary structure comprises 478 residues: Probable sodium/glutamine symporter GlnT (478 aa).

10 helical membrane-spanning segments follow: residues 14–34 (DLLW…YFTF), 85–105 (IAIA…IIAI), 145–165 (WMGA…FNSV), 185–205 (LGLI…KRIA), 211–231 (IVVV…FSNI), 236–256 (GVLA…GGAL), 298–318 (AFGV…IILF), 342–362 (GSWA…CALI), 381–401 (LIFV…VAKV), and 411–431 (FMGL…KVVF).

It belongs to the alanine or glycine:cation symporter (AGCS) (TC 2.A.25) family.

It is found in the cell membrane. In terms of biological role, probably functions as a sodium/glutamine symporter for glutamine uptake. The polypeptide is Probable sodium/glutamine symporter GlnT (glnT) (Bacillus subtilis (strain 168)).